A 65-amino-acid chain; its full sequence is Large ribosomal subunit protein uL29 (65 aa).

It belongs to the universal ribosomal protein uL29 family.

This chain is Large ribosomal subunit protein uL29, found in Dehalococcoides mccartyi (strain ATCC BAA-2266 / KCTC 15142 / 195) (Dehalococcoides ethenogenes (strain 195)).